The primary structure comprises 59 residues: Large ribosomal subunit protein bL32c (59 aa).

Residues 37 to 59 (SRSFSSGNEHPKPKGFSGQQANK) are disordered.

Belongs to the bacterial ribosomal protein bL32 family.

Its subcellular location is the plastid. It is found in the chloroplast. This is Large ribosomal subunit protein bL32c from Saccharum hybrid (Sugarcane).